Consider the following 1149-residue polypeptide: Probable phospholipid-transporting ATPase IA (1149 aa).

At 1-65 the chain is on the cytoplasmic side; it reads MPTMRRTVSE…TAKYNIITFL (65 aa). S25 carries the phosphoserine modification. The residue at position 28 (T28) is a Phosphothreonine. S29 carries the phosphoserine modification. A helical membrane pass occupies residues 66–86; it reads PRFLYSQFRRAANSFFLFIAL. Residues 87-92 lie on the Extracellular side of the membrane; it reads LQQIPD. Residues 93–115 form a helical membrane-spanning segment; that stretch reads VSPTGRYTTLVPLLFILAVAAIK. Residues 116 to 297 lie on the Cytoplasmic side of the membrane; the sequence is EIIEDIKRHK…SNVERITNVQ (182 aa). A helical transmembrane segment spans residues 298-319; it reads ILILFCILIAMSLVCSVGSAIW. Topologically, residues 320–344 are extracellular; that stretch reads NRRHSGRDWYLNLNYGGANNFGLNF. The helical transmembrane segment at 345–366 threads the bilayer; the sequence is LTFIILFNNLIPISLLVTLEVV. At 367–842 the chain is on the cytoplasmic side; sequence KFTQAYFINW…GAWNYNRGSK (476 aa). Residue D409 is the 4-aspartylphosphate intermediate of the active site. ATP is bound by residues D409, K410, T411, E493, F534, K557, R590, T670, G671, D672, 726-733, R760, and K766; that span reads ALIIDGKT. D409 lines the Mg(2+) pocket. T411 is a Mg(2+) binding site. A Mg(2+)-binding site is contributed by D786. The ATP site is built by N789 and D790. D790 is a Mg(2+) binding site. Residues 843 to 863 form a helical membrane-spanning segment; the sequence is CILYCFYKNIVLYIIEIWFAF. Residues 864–875 are Extracellular-facing; it reads VNGFSGQILFER. Residues 876–895 traverse the membrane as a helical segment; sequence WCIGLYNVMFTAMPPLTLGI. At 896–925 the chain is on the cytoplasmic side; it reads FERSCRKEYMLKYPELYKTSQNALDFNTKV. The helical transmembrane segment at 926 to 947 threads the bilayer; the sequence is FWVHCLNGLFHSVILFWFPLKA. At 948-961 the chain is on the extracellular side; that stretch reads LQYGTVFENGRTSD. A helical transmembrane segment spans residues 962–984; that stretch reads YLLLGNFVYTFVVITVCLKAGLE. At 985–990 the chain is on the cytoplasmic side; that stretch reads TSYWTW. The chain crosses the membrane as a helical span at residues 991–1011; the sequence is FSHIAIWGSIALWVVFFGIYS. Over 1012–1029 the chain is Extracellular; the sequence is SLWPAVPMAPDMSGEAAM. The helical transmembrane segment at 1030–1055 threads the bilayer; the sequence is LFSSGVFWMGLLFIPVASLLLDVVYK. The Cytoplasmic segment spans residues 1056–1149; it reads VIKRTAFKTL…DTTKQRPDEW (94 aa). Residue 1080-1087 participates in ATP binding; sequence GAVVLGKS. S1111 is modified (phosphoserine).

Belongs to the cation transport ATPase (P-type) (TC 3.A.3) family. Type IV subfamily. Component of a P4-ATPase flippase complex which consists of a catalytic alpha subunit and an accessory beta subunit. Interacts with TMEM30A to form a flippase complex; this complex forms an intermediate phosphoenzyme. Interacts with TMEM30B; this interaction is reported conflictingly. Mg(2+) serves as cofactor. In terms of processing, cleaved by calpain in a caspase- and calcium influx-dependent manner during platelet apoptosis leading to a 100 kDa polypeptide. In terms of tissue distribution, kidney.

Its subcellular location is the cytoplasmic vesicle. It localises to the secretory vesicle. The protein localises to the chromaffin granule membrane. The protein resides in the cytoplasmic granule. It is found in the cell membrane. Its subcellular location is the endoplasmic reticulum. It localises to the golgi apparatus. The enzyme catalyses ATP + H2O + phospholipidSide 1 = ADP + phosphate + phospholipidSide 2.. The catalysed reaction is a 1,2-diacyl-sn-glycero-3-phospho-L-serine(out) + ATP + H2O = a 1,2-diacyl-sn-glycero-3-phospho-L-serine(in) + ADP + phosphate + H(+). Functionally, catalytic component of a P4-ATPase flippase complex which catalyzes the hydrolysis of ATP coupled to the transport of aminophospholipids from the outer to the inner leaflet of various membranes and ensures the maintenance of asymmetric distribution of phospholipids. Phospholipid translocation also seems to be implicated in vesicle formation and in uptake of lipid signaling molecules. In vitro, its ATPase activity is selectively and stereospecifically stimulated by phosphatidylserine (PS). The flippase complex ATP8A1:TMEM30A seems to play a role in regulation of cell migration probably involving flippase-mediated translocation of phosphatidylethanolamine (PE) at the cell membrane. Acts as aminophospholipid translocase at the cell membrane in neuronal cells. The chain is Probable phospholipid-transporting ATPase IA from Bos taurus (Bovine).